A 411-amino-acid chain; its full sequence is Ribose-phosphate pyrophosphokinase 3, chloroplastic (411 aa).

The N-terminal 39 residues, 1–39, are a transit peptide targeting the chloroplast; it reads MAAISPANATTAASLSLPQFSSTSSSLSSSSSPSFLNFK. Asp-231 and His-233 together coordinate Mg(2+). The tract at residues 314 to 329 is binding of phosphoribosylpyrophosphate; that stretch reads GRHVVIVDDLVQSGGT.

It belongs to the ribose-phosphate pyrophosphokinase family.

It localises to the plastid. Its subcellular location is the chloroplast. It carries out the reaction D-ribose 5-phosphate + ATP = 5-phospho-alpha-D-ribose 1-diphosphate + AMP + H(+). The polypeptide is Ribose-phosphate pyrophosphokinase 3, chloroplastic (PRS3) (Arabidopsis thaliana (Mouse-ear cress)).